The sequence spans 975 residues: Protein spalten (975 aa).

2 disordered regions span residues 1 to 31 (MKKM…QLAQ) and 64 to 99 (NLAQ…SNNN). The span at 8 to 17 (NKKEKKEEQS) shows a compositional bias: basic and acidic residues. Residues 21–70 (SSLAQQHQLAQQQYQLQQQQLQLQYQQHQQQLQLAQQQKQNEQNLAQLST) are a coiled coil. One can recognise a G-alpha domain in the interval 114–458 (FCGTIMILGH…DAEKRGFTTP (345 aa)). A G1 motif region spans residues 117 to 130 (TIMILGHTESGKTT). GTP contacts are provided by residues 122–129 (GHTESGKT), 261–267 (ISAYDQK), 286–290 (GCSGK), and 373–376 (NTSD). The interval 259-267 (DIISAYDQK) is G2 motif. The G3 motif stretch occupies residues 282-291 (VDLFGCSGKQ). The segment at 369–376 (YLIFNTSD) is G4 motif. The segment at 427-432 (VNLLDK) is G5 motif. Disordered stretches follow at residues 455–520 (FTTP…GSST) and 541–700 (DNDS…VGSK). 3 stretches are compositionally biased toward low complexity: residues 460–478 (NQSN…SRNS), 500–515 (LKNV…NTTT), and 544–587 (SSYS…NNAT). Residues 595–688 (PPKEPKPVKP…DGAAESKKNG (94 aa)) are compositionally biased toward basic and acidic residues. The PPM-type phosphatase domain occupies 704–972 (ESGFGSLQGR…DNITVLVVIL (269 aa)). Positions 749, 750, 920, and 963 each coordinate Mn(2+).

The protein in the N-terminal section; belongs to the G-alpha family. This sequence in the C-terminal section; belongs to the PP2C family. As to quaternary structure, g proteins are composed of 3 units; alpha, beta and gamma. The alpha chain contains the guanine nucleotide binding site. It depends on Mg(2+) as a cofactor. Requires Mn(2+) as cofactor.

The protein localises to the cytoplasm. It localises to the cytosol. It is found in the cell membrane. It catalyses the reaction O-phospho-L-seryl-[protein] + H2O = L-seryl-[protein] + phosphate. The catalysed reaction is O-phospho-L-threonyl-[protein] + H2O = L-threonyl-[protein] + phosphate. Inhibited by 50 mM NaF (sodium fluoride). Functionally, involved in cell-type differentiation and morphogenesis. Dephosphorylates casein; in vitro. May also be involved as modulators or transducers in various transmembrane signaling systems. The chain is Protein spalten (spnA) from Dictyostelium discoideum (Social amoeba).